Reading from the N-terminus, the 354-residue chain is Probable RNA methyltransferase AZOSEA28700 (354 aa).

The active-site Proton acceptor is the Glu88. Residues 91 to 317 enclose the Radical SAM core domain; the sequence is LLPRDGLCVS…TKLRHSAGQD (227 aa). Cys98 and Cys322 are joined by a disulfide. 3 residues coordinate [4Fe-4S] cluster: Cys105, Cys109, and Cys112. S-adenosyl-L-methionine-binding positions include 150-151, Ser180, 203-205, and Asn279; these read GE and SLH. Cys322 functions as the S-methylcysteine intermediate in the catalytic mechanism.

The protein belongs to the radical SAM superfamily. RlmN family. The cofactor is [4Fe-4S] cluster.

The protein resides in the cytoplasm. In Aromatoleum aromaticum (strain DSM 19018 / LMG 30748 / EbN1) (Azoarcus sp. (strain EbN1)), this protein is Probable RNA methyltransferase AZOSEA28700.